An 822-amino-acid chain; its full sequence is Ras GTPase-activating-like protein rgaA (822 aa).

Residues 1–36 (MNKEEYSDISDSESEEVHETNNHNEHEHEEEDDTPE) form a disordered region. Residues 15-27 (EEVHETNNHNEHE) are compositionally biased toward basic and acidic residues. Positions 104-152 (EDKESDWIAEIQELKRNLVSEVRRNHTLERDLNRLDKRIALLIKNRGNI) form a coiled coil. Positions 161–822 (GLKAPKHKGD…IHLLNKLFLY (662 aa)) are required for interaction to rac1A. Residues 234–477 (FLLLSLYRLS…GDIKNYLQEI (244 aa)) enclose the Ras-GAP domain.

In terms of assembly, heterotetramer. Quaternary complex with activated rac1A, ctxA and ctxB. Interacts directly with rac1A and ctxA. Preferentially interacts with activated forms of rac1A, rac1B and rac1C. Interacts with racE.

The protein resides in the cytoplasm. It localises to the cell cortex. Its subcellular location is the cleavage furrow. Functionally, part of signaling pathway that is required for completion of cytokinesis. gapA and rgaA control cortexillin localization to the cleavage furrow and hence may be involved in cleavage of the midbody in the final stage of cytokinesis by regulating the actin cytoskeleton. Forms a complex by linking activated rac1A to ctxA. Assembly of this complex is necessary for the recruitment of cortexillin to the midzone of a dividing cell. Overexpression leads to the suppression of the formation of cellular projections containing F-actin and to a defect in cytokinesis. This chain is Ras GTPase-activating-like protein rgaA (rgaA), found in Dictyostelium discoideum (Social amoeba).